The sequence spans 474 residues: PTS system N-acetylmuramic acid-specific EIIBC component (474 aa).

A PTS EIIB type-1 domain is found at 1 to 89; it reads MAKEISSELL…SELLGDAPVQ (89 aa). The Cytoplasmic segment spans residues 1-123; it reads MAKEISSELL…LAKFATIFTP (123 aa). The active-site Phosphocysteine intermediate; for EIIB activity is the Cys-29. The PTS EIIC type-1 domain occupies 115 to 474; the sequence is AKFATIFTPL…LFGCRNVNLD (360 aa). The helical transmembrane segment at 124–144 threads the bilayer; sequence LIPGFIAAGLLLGIATLIATV. Topologically, residues 145–157 are periplasmic; that stretch reads MHVPADAQGTLPD. Residues 158-178 form a helical membrane-spanning segment; that stretch reads ALNFMKVFSKGLFTFLVILVG. At 179–180 the chain is on the cytoplasmic side; it reads YN. The helical transmembrane segment at 181–201 threads the bilayer; it reads AAQAFGGTGVNGAIIAALFLL. At 202–217 the chain is on the periplasmic side; the sequence is GYNPAATTGYYAGFHD. The helical transmembrane segment at 218–238 threads the bilayer; it reads FFGLPIDPRGNIIGVLIAAWA. The Cytoplasmic portion of the chain corresponds to 239-260; the sequence is CARIEGMVRRFMPDDLDMLLTS. Residues 261–281 traverse the membrane as a helical segment; it reads LITLLITATLAYLIIMPLGGW. Residues 282-301 are Periplasmic-facing; sequence LFEGMSWLFMHLNSNPFGCA. The helical transmembrane segment at 302 to 322 threads the bilayer; the sequence is VLAGLFLIAVVFGVHQGFIPV. The Cytoplasmic portion of the chain corresponds to 323-334; the sequence is YLALMDSQGFNS. Residues 335-355 form a helical membrane-spanning segment; that stretch reads LFPILSMAGAGQVGAALALYW. Residues 356–368 lie on the Periplasmic side of the membrane; it reads RAQPHSALRSQVR. The chain crosses the membrane as a helical span at residues 369 to 389; that stretch reads GAIIPGLLGVGEPLIYGVTLP. Topologically, residues 390–393 are cytoplasmic; the sequence is RMKP. A helical transmembrane segment spans residues 394 to 414; that stretch reads FVTACLGGAAGGLFIGLIAWW. Topologically, residues 415–440 are periplasmic; sequence GLPMGLNSAFGPSGLVALPLMTSAQG. Residues 441-461 traverse the membrane as a helical segment; the sequence is ILPAMAVYAGGILVAWVCGFI. The Cytoplasmic portion of the chain corresponds to 462 to 474; sequence FTTLFGCRNVNLD.

It is found in the cell inner membrane. The catalysed reaction is N-acetyl-beta-D-muramate(out) + N(pros)-phospho-L-histidyl-[protein] = N-acetyl-beta-D-muramate 6-phosphate(in) + L-histidyl-[protein]. The phosphoenolpyruvate-dependent sugar phosphotransferase system (sugar PTS), a major carbohydrate active transport system, catalyzes the phosphorylation of incoming sugar substrates concomitantly with their translocation across the cell membrane. This system is involved in N-acetylmuramic acid (MurNAc) transport, yielding cytoplasmic MurNAc-6-P. Is also able to take up anhydro-N-acetylmuramic acid (anhMurNAc), but cannot phosphorylate the carbon 6, probably because of the 1,6-anhydro ring. This Shigella flexneri protein is PTS system N-acetylmuramic acid-specific EIIBC component (murP).